Here is a 287-residue protein sequence, read N- to C-terminus: PIH1 domain-containing protein 1 (287 aa).

The protein belongs to the PIH1 family.

It localises to the nucleus. In terms of biological role, involved in the assembly of C/D box small nucleolar ribonucleoprotein (snoRNP) particles. Recruits the SWI/SNF complex to the core promoter of rRNA genes and enhances pre-rRNA transcription. Mediates interaction of TELO2 with the R2TP complex which is necessary for the stability of MTOR and SMG1. Positively regulates the assembly and activity of the mTORC1 complex. The sequence is that of PIH1 domain-containing protein 1 (pih1d1) from Danio rerio (Zebrafish).